A 377-amino-acid polypeptide reads, in one-letter code: MSVLFTILLMAVIGGFIGAMTNYIAIRMLFRPYKAIYLFNKRLPFTPGLIPKRRDELAEHIGKVVVSHLLTEDAIRARLLDENLQKEITDTITKMFHEKMQLETTPNELLHHFGYENAEIRSMAWIEKTMEKEINHFLSTKKTTKMSDLIPTMLESELTTKLPHVTERITSKMALFVASEEGKSQIKQMLQKFFEEHGKMGSMARMFINVDSFSEKIQQEGLKLIDQEDTKNLINQLLTTEWKNFEAKELQELIPTEKQVHLAGQLTSELIQTFPHEKLFNQPIQVILRNYETTIVEKVIPFAVERMLDFVATHSAEIVERMDLAKLVETQIATFSLPEIEKLVVEISGRELKMITYLGGILGGFIGVIQGILAMWI.

A run of 2 helical transmembrane segments spans residues 1 to 21 (MSVL…GAMT) and 357 to 377 (YLGG…AMWI).

The protein belongs to the UPF0754 family.

Its subcellular location is the cell membrane. This Listeria monocytogenes serotype 4a (strain HCC23) protein is UPF0754 membrane protein LMHCC_0318.